A 179-amino-acid polypeptide reads, in one-letter code: ATP synthase subunit delta (179 aa).

It belongs to the ATPase delta chain family. As to quaternary structure, F-type ATPases have 2 components, F(1) - the catalytic core - and F(0) - the membrane proton channel. F(1) has five subunits: alpha(3), beta(3), gamma(1), delta(1), epsilon(1). F(0) has three main subunits: a(1), b(2) and c(10-14). The alpha and beta chains form an alternating ring which encloses part of the gamma chain. F(1) is attached to F(0) by a central stalk formed by the gamma and epsilon chains, while a peripheral stalk is formed by the delta and b chains.

The protein localises to the cell inner membrane. In terms of biological role, f(1)F(0) ATP synthase produces ATP from ADP in the presence of a proton or sodium gradient. F-type ATPases consist of two structural domains, F(1) containing the extramembraneous catalytic core and F(0) containing the membrane proton channel, linked together by a central stalk and a peripheral stalk. During catalysis, ATP synthesis in the catalytic domain of F(1) is coupled via a rotary mechanism of the central stalk subunits to proton translocation. Functionally, this protein is part of the stalk that links CF(0) to CF(1). It either transmits conformational changes from CF(0) to CF(1) or is implicated in proton conduction. In Burkholderia cenocepacia (strain ATCC BAA-245 / DSM 16553 / LMG 16656 / NCTC 13227 / J2315 / CF5610) (Burkholderia cepacia (strain J2315)), this protein is ATP synthase subunit delta.